The sequence spans 982 residues: Glutamate [NMDA] receptor subunit 1 (982 aa).

A signal peptide spans 1–22 (MRVAFIYRWLLCGAAIVNVLVA). The Extracellular portion of the chain corresponds to 23 to 568 (QRHTASDNPS…TLVSFLQPFS (546 aa)). Asn-253, Asn-309, Asn-340, Asn-392, Asn-449, Asn-476, and Asn-496 each carry an N-linked (GlcNAc...) asparagine glycan. Residues 525-527 (PLT) and Arg-532 contribute to the glycine site. Residues 569-589 (NTLWILVMVSVHVVALVLYLL) traverse the membrane as a helical segment. Residues 590–646 (DRFSPFGRFKLSHSDSNEEKALNLSSAVWFAWGVLLNSGIGEGTPRSFSARVLGMVW) are Cytoplasmic-facing. A helical membrane pass occupies residues 647 to 667 (AGFAMIIVASYTANLAAFLVL). The Extracellular segment spans residues 668–826 (ERPKTKLSGI…KTPNTLGLKN (159 aa)). Asn-688 carries an N-linked (GlcNAc...) asparagine glycan. Ser-698 and Asp-742 together coordinate glycine. A helical transmembrane segment spans residues 827–847 (MAGVFILVGVGIAGGVGLIII). Over 848–982 (EVIYKKHQVK…YTSDVSHLVV (135 aa)) the chain is Cytoplasmic. The interval 948 to 982 (LTASQLGLGKTRPQQNPLPPRYSPGYTSDVSHLVV) is disordered. Residues 972 to 982 (GYTSDVSHLVV) are compositionally biased toward polar residues.

This sequence belongs to the glutamate-gated ion channel (TC 1.A.10.1) family. In terms of assembly, forms a heteromeric NMDA channel with Nmdar2.

Its subcellular location is the cell membrane. The protein resides in the postsynaptic cell membrane. The protein localises to the postsynaptic density. NMDA receptor subtype of glutamate-gated ion channels with high calcium permeability and voltage-dependent sensitivity to magnesium. Mediated by glycine. This protein plays a key role in synaptic plasticity, synaptogenesis, excitotoxicity, memory acquisition and learning. It mediates neuronal functions in glutamate neurotransmission. Is involved in the cell surface targeting of NMDA receptors. Plays a role in associative learning and in long-term memory consolidation. This chain is Glutamate [NMDA] receptor subunit 1, found in Drosophila grimshawi (Hawaiian fruit fly).